The following is a 326-amino-acid chain: Chitinase 12 (326 aa).

Positions 1-21 are cleaved as a signal peptide; the sequence is MRALAVVAMVATAFLAAAVHA. Positions 22 to 62 constitute a Chitin-binding type-1 domain; it reads EQCGSQAGGAVCPNCLCCSQFGWCGSTSDYCGAGCQSQCSA. 8 cysteine pairs are disulfide-bonded: cysteine 24–cysteine 39, cysteine 33–cysteine 45, cysteine 36–cysteine 65, cysteine 38–cysteine 52, cysteine 56–cysteine 60, cysteine 102–cysteine 165, cysteine 179–cysteine 187, and cysteine 286–cysteine 318. Glutamate 147 (proton donor) is an active-site residue.

It belongs to the glycosyl hydrolase 19 family. Chitinase class I subfamily. In terms of tissue distribution, expressed in meristems and at lower levels in roots and sheaths.

It catalyses the reaction Random endo-hydrolysis of N-acetyl-beta-D-glucosaminide (1-&gt;4)-beta-linkages in chitin and chitodextrins.. Functionally, hydrolyzes chitin and plays a role in defense against fungal pathogens containing chitin. Its overexpression confers enhanced resistance to sheath blight pathogen (R.solani). This chain is Chitinase 12 (Cht12), found in Oryza sativa subsp. japonica (Rice).